The primary structure comprises 239 residues: ATP-dependent dethiobiotin synthetase BioD (239 aa).

15–20 (EIGKTF) contributes to the ATP binding site. Residue Thr-19 participates in Mg(2+) binding. Residue Lys-40 is part of the active site. ATP-binding positions include Asp-57, 118–121 (EGVG), and 178–179 (NH). Asp-57 and Glu-118 together coordinate Mg(2+).

Belongs to the dethiobiotin synthetase family. In terms of assembly, homodimer. Mg(2+) serves as cofactor.

The protein localises to the cytoplasm. The catalysed reaction is (7R,8S)-7,8-diammoniononanoate + CO2 + ATP = (4R,5S)-dethiobiotin + ADP + phosphate + 3 H(+). The protein operates within cofactor biosynthesis; biotin biosynthesis; biotin from 7,8-diaminononanoate: step 1/2. Its function is as follows. Catalyzes a mechanistically unusual reaction, the ATP-dependent insertion of CO2 between the N7 and N8 nitrogen atoms of 7,8-diaminopelargonic acid (DAPA, also called 7,8-diammoniononanoate) to form a ureido ring. This is ATP-dependent dethiobiotin synthetase BioD from Burkholderia cenocepacia (strain HI2424).